The following is a 323-amino-acid chain: Probable pectate lyase A (323 aa).

Positions M1–A20 are cleaved as a signal peptide. N95 carries an N-linked (GlcNAc...) asparagine glycan. Residues D136, D165, and D169 each contribute to the Ca(2+) site. R222 is a catalytic residue.

The protein belongs to the polysaccharide lyase 1 family. The cofactor is Ca(2+).

The protein localises to the secreted. It catalyses the reaction Eliminative cleavage of (1-&gt;4)-alpha-D-galacturonan to give oligosaccharides with 4-deoxy-alpha-D-galact-4-enuronosyl groups at their non-reducing ends.. Functionally, pectinolytic enzyme consist of four classes of enzymes: pectin lyase, polygalacturonase, pectin methylesterase and rhamnogalacturonase. Among pectinolytic enzymes, pectin lyase is the most important in depolymerization of pectin, since it cleaves internal glycosidic bonds of highly methylated pectins. Favors pectate, the anion, over pectin, the methyl ester. This chain is Probable pectate lyase A (plyA), found in Aspergillus niger (strain ATCC MYA-4892 / CBS 513.88 / FGSC A1513).